The primary structure comprises 178 residues: Outer envelope pore protein 16-2, chloroplastic (178 aa).

The interval 1–102 (MEKSGGRIVM…DALVKNTGKE (102 aa)) is contains beta strands. The helical transmembrane segment at 103–119 (SLQWGLAAGLYSGITYG) threads the bilayer.

It belongs to the Tim17/Tim22/Tim23 family. Plastid outer envelope porin OEP16 (TC 1.B.30) subfamily. In terms of assembly, homodimer and oligomers in membrane. As to expression, detected in pollen and seeds. Present in leaves and cotyledons.

The protein resides in the plastid. It localises to the chloroplast outer membrane. Its function is as follows. Voltage-dependent high-conductance channel with a slight cation-selectivity; selective for amino acids but excludes triosephosphates or uncharged sugars. Non-essential amino acid-selective channel protein and translocation pore for NADPH:protochlorophyllide oxidoreductase A (PORA) and possibly PORB. This Arabidopsis thaliana (Mouse-ear cress) protein is Outer envelope pore protein 16-2, chloroplastic (OEP162).